The following is an 89-amino-acid chain: Small ribosomal subunit protein uS15 (89 aa).

This sequence belongs to the universal ribosomal protein uS15 family. Part of the 30S ribosomal subunit. Forms a bridge to the 50S subunit in the 70S ribosome, contacting the 23S rRNA.

Functionally, one of the primary rRNA binding proteins, it binds directly to 16S rRNA where it helps nucleate assembly of the platform of the 30S subunit by binding and bridging several RNA helices of the 16S rRNA. Its function is as follows. Forms an intersubunit bridge (bridge B4) with the 23S rRNA of the 50S subunit in the ribosome. The protein is Small ribosomal subunit protein uS15 of Vibrio parahaemolyticus serotype O3:K6 (strain RIMD 2210633).